The following is a 507-amino-acid chain: Sugar transport protein 8 (507 aa).

Over 1 to 21 (MAVVISSNGNSKSFDAKMTVY) the chain is Cytoplasmic. The next 12 helical transmembrane spans lie at 22–42 (VFIC…DIGI), 79–99 (FLQL…FFAS), 116–136 (IFFL…MLII), 139–159 (ILLG…LSEI), 166–186 (GGLN…ANIV), 200–220 (IALG…LLIC), 281–301 (FVIG…AIMF), 319–339 (LSAV…IFLV), 346–366 (FLLL…GIIL), 382–402 (LVVV…WGPL), 419–439 (GFAL…QAFL), and 448–468 (GIFF…LFFV). Residues 469–507 (PETKGVSIDDMRDSVWKLHWYWKRFMLEEDEHDVEKRTD) lie on the Cytoplasmic side of the membrane.

It belongs to the major facilitator superfamily. Sugar transporter (TC 2.A.1.1) family.

Its subcellular location is the membrane. Mediates an active uptake of hexoses, probably by sugar/hydrogen symport. This chain is Sugar transport protein 8 (STP8), found in Arabidopsis thaliana (Mouse-ear cress).